The primary structure comprises 211 residues: LexA repressor (211 aa).

The H-T-H motif DNA-binding region spans 29-49 (VREICTAVGLRSTSTVHSHLN). Residues serine 131 and lysine 169 each act as for autocatalytic cleavage activity in the active site.

The protein belongs to the peptidase S24 family. Homodimer.

It carries out the reaction Hydrolysis of Ala-|-Gly bond in repressor LexA.. Represses a number of genes involved in the response to DNA damage (SOS response), including recA and lexA. In the presence of single-stranded DNA, RecA interacts with LexA causing an autocatalytic cleavage which disrupts the DNA-binding part of LexA, leading to derepression of the SOS regulon and eventually DNA repair. The sequence is that of LexA repressor from Clostridioides difficile (strain 630) (Peptoclostridium difficile).